We begin with the raw amino-acid sequence, 29 residues long: Glucagon (29 aa).

It belongs to the glucagon family.

It localises to the secreted. In terms of biological role, promotes hydrolysis of glycogen and lipids, and raises the blood sugar level. The protein is Glucagon (gcg) of Thunnus obesus (Bigeye tuna).